The sequence spans 240 residues: uncharacterized protein (240 aa).

A disordered region spans residues 1 to 27 (MKDLQKKSSVRRQITNEDDERYGEDSI). Phosphoserine occurs at positions 59 and 95. Residues 189–227 (RTPSPTGKSVGDEATSNNMHSSSAIRNPNGPTVDPEEGK) form a disordered region. Residues 202-218 (ATSNNMHSSSAIRNPNG) show a composition bias toward polar residues.

This is an uncharacterized protein from Saccharomyces cerevisiae (strain ATCC 204508 / S288c) (Baker's yeast).